Consider the following 454-residue polypeptide: tRNA modification GTPase MnmE (454 aa).

Residues arginine 23, glutamate 80, and lysine 120 each coordinate (6S)-5-formyl-5,6,7,8-tetrahydrofolate. The TrmE-type G domain maps to 216 to 377 (GMKVVIAGRP…LRNHLKQSMG (162 aa)). Asparagine 226 contributes to the K(+) binding site. GTP is bound by residues 226–231 (NAGKSS), 245–251 (TDIAGTT), 270–273 (DTAG), 335–338 (NKAD), and 358–360 (SAR). A Mg(2+)-binding site is contributed by serine 230. K(+) is bound by residues threonine 245, isoleucine 247, and threonine 250. Threonine 251 provides a ligand contact to Mg(2+). Lysine 454 is a (6S)-5-formyl-5,6,7,8-tetrahydrofolate binding site.

It belongs to the TRAFAC class TrmE-Era-EngA-EngB-Septin-like GTPase superfamily. TrmE GTPase family. Homodimer. Heterotetramer of two MnmE and two MnmG subunits. K(+) is required as a cofactor.

It localises to the cytoplasm. In terms of biological role, exhibits a very high intrinsic GTPase hydrolysis rate. Involved in the addition of a carboxymethylaminomethyl (cmnm) group at the wobble position (U34) of certain tRNAs, forming tRNA-cmnm(5)s(2)U34. The sequence is that of tRNA modification GTPase MnmE from Escherichia coli O7:K1 (strain IAI39 / ExPEC).